Here is a 71-residue protein sequence, read N- to C-terminus: UPF0346 protein SZO_05010 (71 aa).

This sequence belongs to the UPF0346 family.

The chain is UPF0346 protein SZO_05010 from Streptococcus equi subsp. zooepidemicus (strain H70).